The sequence spans 64 residues: Prokaryotic ubiquitin-like protein Pup (64 aa).

The tract at residues 1–37 is disordered; it reads MAQEQTKRGGGGGDDEDVTGTTAAGQERREKLAQDTD. Positions 21 to 58 are ARC ATPase binding; sequence TTAAGQERREKLAQDTDDLLDEIDDVLEENAEDFVRAY. Residues 25-52 adopt a coiled-coil conformation; it reads GQERREKLAQDTDDLLDEIDDVLEENAE. Glutamine 64 is subject to Deamidated glutamine. Glutamine 64 is covalently cross-linked (Isoglutamyl lysine isopeptide (Gln-Lys) (interchain with K-? in acceptor proteins)).

This sequence belongs to the prokaryotic ubiquitin-like protein family. In terms of assembly, strongly interacts with the proteasome-associated ATPase ARC through a hydrophobic interface; the interacting region of Pup lies in its C-terminal half. There is one Pup binding site per ARC hexamer ring. Post-translationally, is modified by deamidation of its C-terminal glutamine to glutamate by the deamidase Dop, a prerequisite to the subsequent pupylation process.

The protein operates within protein degradation; proteasomal Pup-dependent pathway. Functionally, protein modifier that is covalently attached to lysine residues of substrate proteins, thereby targeting them for proteasomal degradation. The tagging system is termed pupylation. The polypeptide is Prokaryotic ubiquitin-like protein Pup (Mycobacterium marinum (strain ATCC BAA-535 / M)).